Consider the following 139-residue polypeptide: Protein archease (139 aa).

Residues Asp12, Asp138, and Ile139 each contribute to the Ca(2+) site.

Belongs to the archease family.

In terms of biological role, activates the tRNA-splicing ligase complex by facilitating the enzymatic turnover of catalytic subunit RtcB. Acts by promoting the guanylylation of RtcB, a key intermediate step in tRNA ligation. Can also alter the NTP specificity of RtcB such that ATP, dGTP or ITP is used efficiently. This Saccharolobus islandicus (strain M.16.27) (Sulfolobus islandicus) protein is Protein archease.